Reading from the N-terminus, the 991-residue chain is KAT8 regulatory NSL complex subunit 1-like protein (991 aa).

Residue Lys136 forms a Glycyl lysine isopeptide (Lys-Gly) (interchain with G-Cter in SUMO2) linkage. Residues 443 to 462 (VNSQVPQRSEEPLPEHDFEM) form a disordered region. Residues 450–461 (RSEEPLPEHDFE) show a composition bias toward basic and acidic residues. Ser463 is subject to Phosphoserine. The span at 749–763 (ANVTSRTQNPSSQNT) shows a compositional bias: polar residues. The tract at residues 749 to 770 (ANVTSRTQNPSSQNTSRRRLRS) is disordered. The PEHE domain maps to 798–919 (EILTPRWRKV…DGQEDKSLRW (122 aa)). The residue at position 863 (Lys863) is an N6-acetyllysine.

In terms of processing, acetylated on lysine residues by KAT8 upon ionizing radiation-induced DNA damage; deacetylated by HDAC3.

This is KAT8 regulatory NSL complex subunit 1-like protein (Kansl1l) from Mus musculus (Mouse).